The following is a 738-amino-acid chain: MYKSQYISGQREKFVRLDDIDSSSSPATGMMMQRNCFGFNLKNRGGEKKKASKSFREGVKKIRSEGLITIGKSVTRAVFPEDLRITEKKIFDPQDKTLLVWNRLFVISCILAVSVDPLFFYLPIVDNSGSSCIGIDTKLAVTTTTLRTIVDVFYLTRMALQFRTAYIAPSSRVFGRGELVIDPAKIAERYLTRYFVVDFLAVLPLPQIAVWKFLHGSKGSDVLPTKTALLNIVIVQYIPRFVRFIPLTSELKKTAGAFAEGAWAGAAYYLLWYMLASHITGAFWYMLSVERNDTCWRFACKVQPDPRLCVQILYCGTKFVSSGETEWIKTVPELLKSNCSAKADDSKFNYGIYGQAISSGIVSSTTFFSKFCYCLWWGLQNLSTLGQGLQTSTFPGEVLFSIAIAIAGLLLFALLIGNMQTYLQSLTVRLEEMRIKRRDSEQWMHHRSLPQNLRERVRRYDQYKWLETRGVDEENIVQSLPKDLRRDIKRHLCLNLVRRVPLFANMDERLLDAICERLKPSLFTESTYIVREGDPVNEMMFIIRGRLESVTTDGGRSGFFNRGLLKEGDFCGEELLTWALDPKAGSNLPSSTRTVKALTEVEAFALEAEELKFVASQFRRLHSRQVQQTFRFYSQQWRTWASCFIQAAWRRYSRRKNAELRRIEEKEEELGYEDEYDDESDKRPMVITRSESSSRLRSTIFASRFAANALKGHRLRSSESSKTLINLQKPPEPDFDAE.

Residues 1-104 lie on the Cytoplasmic side of the membrane; sequence MYKSQYISGQ…DKTLLVWNRL (104 aa). The chain crosses the membrane as a helical span at residues 105-125; that stretch reads FVISCILAVSVDPLFFYLPIV. Residues 126–139 lie on the Extracellular side of the membrane; it reads DNSGSSCIGIDTKL. A helical transmembrane segment spans residues 140–160; sequence AVTTTTLRTIVDVFYLTRMAL. The Cytoplasmic segment spans residues 161–193; sequence QFRTAYIAPSSRVFGRGELVIDPAKIAERYLTR. A helical transmembrane segment spans residues 194–214; it reads YFVVDFLAVLPLPQIAVWKFL. Topologically, residues 215 to 227 are extracellular; the sequence is HGSKGSDVLPTKT. The chain crosses the membrane as a helical span at residues 228 to 248; that stretch reads ALLNIVIVQYIPRFVRFIPLT. Residues 249–268 are Cytoplasmic-facing; the sequence is SELKKTAGAFAEGAWAGAAY. A helical transmembrane segment spans residues 269 to 289; it reads YLLWYMLASHITGAFWYMLSV. Residues 290–395 are Extracellular-facing; that stretch reads ERNDTCWRFA…GQGLQTSTFP (106 aa). Residues 396–416 traverse the membrane as a helical segment; sequence GEVLFSIAIAIAGLLLFALLI. Topologically, residues 417–738 are cytoplasmic; that stretch reads GNMQTYLQSL…KPPEPDFDAE (322 aa). A nucleoside 3',5'-cyclic phosphate is bound by residues 502-632 and E573; that span reads LFAN…TFRF. The tract at residues 618-633 is calmodulin-binding; it reads FRRLHSRQVQQTFRFY. The region spanning 638–667 is the IQ domain; it reads RTWASCFIQAAWRRYSRRKNAELRRIEEKE. Disordered regions lie at residues 671 to 693 and 715 to 738; these read GYED…SESS and LRSS…FDAE.

Belongs to the cyclic nucleotide-gated cation channel (TC 1.A.1.5) family. As to quaternary structure, homotetramer or heterotetramer.

The protein resides in the cell membrane. Its function is as follows. Putative cyclic nucleotide-gated ion channel. This is Putative cyclic nucleotide-gated ion channel 7 (CNGC7) from Arabidopsis thaliana (Mouse-ear cress).